Here is a 131-residue protein sequence, read N- to C-terminus: Fluoride-specific ion channel FluC 2 (131 aa).

4 helical membrane-spanning segments follow: residues 5 to 25 (SAVFIGGALGACLRYGLNLWI), 35 to 55 (WLENAAGSLLLGILTGFFMIG), 59 to 79 (PLLSAFLGTGFCGGFTTMSTF), and 95 to 115 (LLYVAASLISGIIFALIGVFV). The Na(+) site is built by glycine 71 and threonine 74.

This sequence belongs to the fluoride channel Fluc/FEX (TC 1.A.43) family.

Its subcellular location is the cell membrane. The enzyme catalyses fluoride(in) = fluoride(out). Na(+) is not transported, but it plays an essential structural role and its presence is essential for fluoride channel function. Fluoride-specific ion channel. Important for reducing fluoride concentration in the cell, thus reducing its toxicity. The protein is Fluoride-specific ion channel FluC 2 of Bacillus subtilis (strain 168).